Reading from the N-terminus, the 684-residue chain is Chaperone protein HtpG (684 aa).

Positions 1-329 (MSKKGTIGVT…SPDIPLNVSR (329 aa)) are a; substrate-binding. The segment at 330–548 (SYLQSDANVK…FMRRMRDMAQ (219 aa)) is b. A c region spans residues 549 to 684 (LQPGMSFYGE…EFIRRSQRLL (136 aa)).

Belongs to the heat shock protein 90 family. As to quaternary structure, homodimer.

The protein resides in the cytoplasm. Its function is as follows. Molecular chaperone. Has ATPase activity. This Porphyromonas gingivalis (strain ATCC BAA-308 / W83) protein is Chaperone protein HtpG.